We begin with the raw amino-acid sequence, 195 residues long: Inner membrane-spanning protein YciB (195 aa).

The next 5 helical transmembrane spans lie at 34–54 (IYGATATLILASVIVYGALWL), 65–85 (FTLGACLVLGGLTLAFHEDTF), 88–108 (WKAPLVNWLFALAFAGSHFIG), 131–151 (LNIAWVVFFLVCGFANLYVVF), and 160–180 (FKVFGSLGMTLLFLIGQGIFL).

This sequence belongs to the YciB family.

It localises to the cell inner membrane. Functionally, plays a role in cell envelope biogenesis, maintenance of cell envelope integrity and membrane homeostasis. The polypeptide is Inner membrane-spanning protein YciB (Pseudomonas paraeruginosa (strain DSM 24068 / PA7) (Pseudomonas aeruginosa (strain PA7))).